The chain runs to 904 residues: MNEYRSSLVFATPDVPLRDDVRRLGALVGDLLAEQVSADFLEEIERIRTTAIARRESDTPPAGLLSLLEGREPRAAEALVRAFSTYFQVVNIAERVHRIRRRRDYQRSGTDTPQPEGLHDALRRLKAQGVTLDELSEWLPRIDVEPVFTAHPTEAVRRALLEKEQLMVASLVDNLDGMRTPNERATDAARFRMALTASWQTADSSPVRPTVEDEREHVGFYLTQVLYRVIPVMYETLEHAIEETYGSTLALPRLLRFGTWVGGDMDGNPNVDAHTIAGTLDAQRRAVLDRYLNELWQLASLLSQSTTLVAVSPALSAQLERYQALLPDAAARSRPRHGDMPYRLLNDLMRARLQATLDDADGAYAAPAELEHDLQLILDSLEVNKGLHAGWFAVRRLLWRVRSFGFHLARLDVRQESSVHARAVADALGQADWDSQDATHRAGLLGPYASGEQALPQVDDEGNARLDAVFAALADARTRHGADALGSYIISMAHNRADVLTVLALARRGGLVDDAGAVPLDIVPLFETVDDLRGGTGTVQDLLADPVYRQHLRARGDTQMVMLGYSDSGKDGGIAASRWGLQRAQVELLEAAAELGVRLTFFHGRGGSIVRGGGKTTRALDAAPRGSVDGRLRVTEQGEVIHRKYGIRALALRSLEQMTGAVLLSSLRPRAPEPREDAWRPVMDLVAERSTVAYRGFVGAPDFMQYFRLATPIDVIERMTLGSRPSRRLGQDAALSNLRAIPWVFAWSQARAVIPGWYGVGSGLQAAVEAGHEDSLREMAQDWPFFRTFLDDIAMVLSKGDLNIAELFSRLAGPLHARFFPRIRDELALTKHWVKTLLGQRSLLQHDPRLALSIRLRNPYIDPISVLQVDLLQRWRATDGEDEELLRALVACVNGVAQGVQNTG.

Active-site residues include H151 and K570.

This sequence belongs to the PEPCase type 1 family. It depends on Mg(2+) as a cofactor.

The enzyme catalyses oxaloacetate + phosphate = phosphoenolpyruvate + hydrogencarbonate. Forms oxaloacetate, a four-carbon dicarboxylic acid source for the tricarboxylic acid cycle. The protein is Phosphoenolpyruvate carboxylase of Xanthomonas campestris pv. campestris (strain ATCC 33913 / DSM 3586 / NCPPB 528 / LMG 568 / P 25).